The following is a 529-amino-acid chain: Calcium-dependent protein kinase 3 (529 aa).

Positions 1 to 73 (MGHRHSKSKS…GRILGRPMEE (73 aa)) are disordered. G2 is lipidated: N-myristoyl glycine. Residues 39–53 (SGSGTVGSSGSGTGG) show a composition bias toward gly residues. Residues 78 to 336 (YEFGRELGRG…AAEVLNHPWI (259 aa)) enclose the Protein kinase domain. Residues 84–92 (LGRGQFGVT) and K107 contribute to the ATP site. D202 (proton acceptor) is an active-site residue. Phosphoserine is present on S242. The segment at 342–372 (ASDKPLDNAVLSRMKQFRAMNKLKKMALKVI) is autoinhibitory domain. 4 EF-hand domains span residues 379-414 (EEIIGLKEMFKSLDTDNNGIVTLEELRTGLPKLGSK), 415-450 (ISEAEIRQLMEAADMDGDGSIDYLEFISATMHMNRI), 451-485 (EREDHLYTAFQFFDNDNSGYITMEELELAMKKYNM), and 486-521 (GDDKSIKEIIAEVDTDRDGKINYEEFVAMMKKGNPE). Ca(2+)-binding residues include D392, D394, N396, E403, D428, D430, D432, S434, E439, D464, D466, S468, Y470, E475, D499, D501, D503, K505, and E510.

The protein belongs to the protein kinase superfamily. Ser/Thr protein kinase family. CDPK subfamily. Interacts with GHR1. In terms of tissue distribution, expressed in both guard cells and mesophyll cells.

The protein localises to the cytoplasm. It localises to the nucleus. The enzyme catalyses L-seryl-[protein] + ATP = O-phospho-L-seryl-[protein] + ADP + H(+). It carries out the reaction L-threonyl-[protein] + ATP = O-phospho-L-threonyl-[protein] + ADP + H(+). With respect to regulation, activated by calcium. Autophosphorylation may play an important role in the regulation of the kinase activity. May play a role in signal transduction pathways that involve calcium as a second messenger. Functions in abscisic acid (ABA) regulation of guard cell S-type anion- and Ca(2+)-permeable channels and stomatal closure. The sequence is that of Calcium-dependent protein kinase 3 from Arabidopsis thaliana (Mouse-ear cress).